Here is a 334-residue protein sequence, read N- to C-terminus: MALPDYSMRQLLEAGVHFGHQSHRWNPKMAPYIFGVRNNIHIIDLSQTVPALHRALQAVSDTVAQGGRVLFVGTKRQAQEQVADAARRSAQYYVNSRWLGGMLTNWKTISNSIARLKKLEEMLSGPEQGSGYTKKERLTLSREKDKLDKALGGIRDMGGLPDLLFVIDTNKEDIAVKEAQRLGIPVAAILDTNCDPDGIAFPVPGNDDAGRAIQLYCELVARAAIDGIGRGHSDLGIDVGAEEAPLVEDLPVETGAWSSFEPLSGPRGVADDLKKLTGVSPEIEQKLNDLGVFHFGQVAGLDAIDAHRIGEEVGLPGRVDGWVAQAKELSAEVE.

This sequence belongs to the universal ribosomal protein uS2 family.

The chain is Small ribosomal subunit protein uS2 from Xanthobacter autotrophicus (strain ATCC BAA-1158 / Py2).